A 32-amino-acid polypeptide reads, in one-letter code: Ferredoxin (32 aa).

The region spanning 3-32 (YKVRLLSEAEGIDVTIDCADDVYILDAAEE) is the 2Fe-2S ferredoxin-type domain.

The protein belongs to the 2Fe2S plant-type ferredoxin family. It depends on [2Fe-2S] cluster as a cofactor.

It is found in the plastid. It localises to the chloroplast. Functionally, ferredoxins are iron-sulfur proteins that transfer electrons in a wide variety of metabolic reactions. The chain is Ferredoxin from Porphyridium purpureum (Red alga).